A 314-amino-acid polypeptide reads, in one-letter code: Dihydroorotate dehydrogenase (fumarate) (314 aa).

FMN contacts are provided by residues Ala21 and 45-46; that span reads KS. Residues Lys45, 69-73, and Asn129 contribute to the substrate site; that span reads NSMGL. Asn129 serves as a coordination point for FMN. Cys132 acts as the Nucleophile in catalysis. A substrate-binding site is contributed by Asn134. The FMN site is built by Lys166 and Val195. Position 196-197 (196-197) interacts with substrate; that stretch reads NS. FMN contacts are provided by residues Gly224, 251–252, and 273–274; these read GG and GT.

It belongs to the dihydroorotate dehydrogenase family. Type 1 subfamily. As to quaternary structure, homodimer. Requires FMN as cofactor.

It localises to the cytoplasm. The catalysed reaction is (S)-dihydroorotate + fumarate = orotate + succinate. It participates in pyrimidine metabolism; UMP biosynthesis via de novo pathway. In terms of biological role, catalyzes the conversion of dihydroorotate to orotate with fumarate as the electron acceptor. Molecular oxygen can replace fumarate in vitro. This chain is Dihydroorotate dehydrogenase (fumarate) (pyr4), found in Trypanosoma cruzi (strain CL Brener).